Here is a 637-residue protein sequence, read N- to C-terminus: Probable membrane transporter protein MamO (637 aa).

Over 1-24 (MIEVGETMGELPTNKIVFCERSWK) the chain is Cytoplasmic. A helical transmembrane segment spans residues 25 to 45 (TPVSILAFLIFVTFAWGIYLL). Residues 46–352 (DHYDEDDNFH…AKIGGYSVAD (307 aa)) are Lumenal-facing. Residues 78-268 (LYHTVPPAVV…VIVSHLQDVV (191 aa)) form a protease-like region. Residues histidine 148 and histidine 263 each coordinate a divalent metal cation. Residues 353 to 373 (IVGLVMLALAAGVTGGMMTMG) traverse the membrane as a helical segment. The tract at residues 370-637 (MTMGGGVLQV…AIALKMLTSV (268 aa)) is TSUP-like. Over 374–378 (GGVLQ) the chain is Cytoplasmic. A helical membrane pass occupies residues 379–399 (VAGMMVFFGYGMYLIRPVVFL). The Lumenal portion of the chain corresponds to 400 to 416 (TNVVVYGAASLRNDKAQ). Residues 417 to 437 (LVQWDKVKPLIPWGIAGVILG) traverse the membrane as a helical segment. Tyrosine 438 is a topological domain (cytoplasmic). Residues 439 to 459 (FIGNAIGDSVVGILLGLFALI) traverse the membrane as a helical segment. Residues 460-517 (MAGKAVMEILQPNAGEETAESISATEAEDEMDELMALADGTSRPKASGLALPEGHARS) are Lumenal-facing. A helical membrane pass occupies residues 518–538 (AVLGLPMGLFSGILGISGGVI). Topologically, residues 539–554 (EVPLQRYVGRISLQNA) are cytoplasmic. A helical transmembrane segment spans residues 555-575 (IANSSVLVFWASVAGSVVAFL). Topologically, residues 576 to 586 (HGSSTGLIHWE) are lumenal. The helical transmembrane segment at 587–607 (APVTLALVMIPGAYVGGIIGA) threads the bilayer. The Cytoplasmic segment spans residues 608-616 (RLMRVLPVR). The helical transmembrane segment at 617 to 637 (VLKGVYAATMAAIALKMLTSV) threads the bilayer.

In the N-terminal section; belongs to the peptidase S1C family. It in the C-terminal section; belongs to the 4-toluene sulfonate uptake permease (TSUP) (TC 2.A.102) family. Requires a metal cation as cofactor. Post-translationally, subject to proteolytic cleavage by MamE.

The protein localises to the magnetosome membrane. Functionally, plays 2 roles; promotes magnetite nucleation/formation and activates the MamE protease. Despite its near conservation of a protease-like sequence, this is probably not a protease. Required in conjunction with MamP for proteolysis of at least MamE, itself and MamP. May transport a solute that controls MamE's protease activity. May place individual iron atoms into the magnetite lattice. The sequence is that of Probable membrane transporter protein MamO (mamO) from Paramagnetospirillum magneticum (strain ATCC 700264 / AMB-1) (Magnetospirillum magneticum).